Here is a 553-residue protein sequence, read N- to C-terminus: Urocanate hydratase (553 aa).

Residues 45–46, glutamine 123, 169–171, aspartate 189, arginine 194, 235–236, 256–260, 266–267, tyrosine 315, and glycine 485 each bind NAD(+); these read GG, GMG, NA, QTSAH, and YV.

Belongs to the urocanase family. NAD(+) serves as cofactor.

It is found in the cytoplasm. It catalyses the reaction 4-imidazolone-5-propanoate = trans-urocanate + H2O. It participates in amino-acid degradation; L-histidine degradation into L-glutamate; N-formimidoyl-L-glutamate from L-histidine: step 2/3. Catalyzes the conversion of urocanate to 4-imidazolone-5-propionate. In Staphylococcus aureus (strain MRSA252), this protein is Urocanate hydratase.